The sequence spans 132 residues: DNA-directed RNA polymerase subunit omega (132 aa).

Positions 100-119 (VSAEEEASHGTAGMSAEELE) are disordered.

It belongs to the RNA polymerase subunit omega family. In terms of assembly, the RNAP catalytic core consists of 2 alpha, 1 beta, 1 beta' and 1 omega subunit. When a sigma factor is associated with the core the holoenzyme is formed, which can initiate transcription.

It carries out the reaction RNA(n) + a ribonucleoside 5'-triphosphate = RNA(n+1) + diphosphate. Functionally, promotes RNA polymerase assembly. Latches the N- and C-terminal regions of the beta' subunit thereby facilitating its interaction with the beta and alpha subunits. This is DNA-directed RNA polymerase subunit omega from Gluconacetobacter diazotrophicus (strain ATCC 49037 / DSM 5601 / CCUG 37298 / CIP 103539 / LMG 7603 / PAl5).